The following is a 386-amino-acid chain: Protein phosphatase methylesterase 1 (386 aa).

The interval 1 to 38 (MSALEKSMHLGRLPSRPPLPGSGGSQSGAKMRMGPGRK) is disordered. Residue Ser-15 is modified to Phosphoserine. An Asymmetric dimethylarginine; alternate modification is found at Arg-16. The residue at position 16 (Arg-16) is an Omega-N-methylarginine; alternate. The active site involves Ser-156. The segment covering 255–265 (IEEEEEDEEGS) has biased composition (acidic residues). The tract at residues 255–280 (IEEEEEDEEGSESVNKRKKEDDMETK) is disordered. Basic and acidic residues predominate over residues 268 to 280 (VNKRKKEDDMETK). The active site involves His-349.

Belongs to the AB hydrolase superfamily. In terms of assembly, binds PPP2CA and PPP2CB. Phosphorylated by SIK1 following increases in intracellular sodium, leading to dissociation from the protein phosphatase 2A (PP2A) complex and subsequent dephosphorylation of sodium/potassium-transporting ATPase ATP1A1.

It catalyses the reaction [phosphatase 2A protein]-C-terminal L-leucine methyl ester + H2O = [phosphatase 2A protein]-C-terminal L-leucine + methanol + H(+). In terms of biological role, demethylates proteins that have been reversibly carboxymethylated. Demethylates PPP2CB (in vitro) and PPP2CA. Binding to PPP2CA displaces the manganese ion and inactivates the enzyme. In Rattus norvegicus (Rat), this protein is Protein phosphatase methylesterase 1 (Ppme1).